Consider the following 550-residue polypeptide: Eukaryotic translation initiation factor 3 subunit D (550 aa).

The tract at residues 288-302 is RNA gate; that stretch reads DFDLLTVSETANEPP. The segment at 526–550 is disordered; it reads PDGTFSSDEEEDDDDEDEEVEEEES. Over residues 532-550 the composition is skewed to acidic residues; the sequence is SDEEEDDDDEDEEVEEEES.

It belongs to the eIF-3 subunit D family. In terms of assembly, component of the eukaryotic translation initiation factor 3 (eIF-3) complex, which is composed of 13 subunits: eif3a, eif3b, eif3c, eif3d, eif3e, eif3f, eif3g, eif3h, eif3i, eif3j, eif3k, eif3l and eif3m.

The protein resides in the cytoplasm. Functionally, mRNA cap-binding component of the eukaryotic translation initiation factor 3 (eIF-3) complex, which is involved in protein synthesis of a specialized repertoire of mRNAs and, together with other initiation factors, stimulates binding of mRNA and methionyl-tRNAi to the 40S ribosome. The eIF-3 complex specifically targets and initiates translation of a subset of mRNAs involved in cell proliferation. In the eIF-3 complex, eif3d specifically recognizes and binds the 7-methylguanosine cap of a subset of mRNAs. The protein is Eukaryotic translation initiation factor 3 subunit D (eif3d) of Xenopus laevis (African clawed frog).